A 406-amino-acid polypeptide reads, in one-letter code: 2,3-diketo-5-methylthiopentyl-1-phosphate enolase (406 aa).

Lys94 acts as the Proton acceptor in catalysis. Residues Lys143, 169-172 (KDDE), His260, Gly332, and 354-355 (GG) contribute to the substrate site. Mg(2+) contacts are provided by Lys169, Asp171, and Glu172. Lys169 carries the post-translational modification N6-carboxylysine.

It belongs to the RuBisCO large chain family. Type IV subfamily. In terms of assembly, homodimer. Mg(2+) serves as cofactor.

The catalysed reaction is 5-methylsulfanyl-2,3-dioxopentyl phosphate = 2-hydroxy-5-methylsulfanyl-3-oxopent-1-enyl phosphate. It functions in the pathway amino-acid biosynthesis; L-methionine biosynthesis via salvage pathway; L-methionine from S-methyl-5-thio-alpha-D-ribose 1-phosphate: step 3/6. Functionally, catalyzes the enolization of 2,3-diketo-5-methylthiopentyl-1-phosphate (DK-MTP-1-P) into 2-hydroxy-3-keto-5-methylthiopentenyl-1-phosphate (HK-MTPenyl-1-P). The chain is 2,3-diketo-5-methylthiopentyl-1-phosphate enolase from Bacillus pumilus (strain SAFR-032).